Here is a 305-residue protein sequence, read N- to C-terminus: Serine/threonine-protein phosphatase PP-X isozyme 1 (305 aa).

Aspartate 51, histidine 53, aspartate 79, and asparagine 111 together coordinate Mn(2+). The Proton donor role is filled by histidine 112. Positions 161 and 236 each coordinate Mn(2+).

The protein belongs to the PPP phosphatase family. PP-4 (PP-X) subfamily. Interacts with TAP46. Requires Mn(2+) as cofactor. Ubiquitous, mostly expressed in root mersitems, flowers, and vascular tissues.

The protein resides in the plastid stroma. The enzyme catalyses O-phospho-L-seryl-[protein] + H2O = L-seryl-[protein] + phosphate. It catalyses the reaction O-phospho-L-threonyl-[protein] + H2O = L-threonyl-[protein] + phosphate. In Arabidopsis thaliana (Mouse-ear cress), this protein is Serine/threonine-protein phosphatase PP-X isozyme 1 (PPX1).